Reading from the N-terminus, the 83-residue chain is Neurotoxin LmNaTx10 (83 aa).

Positions 1–19 are cleaved as a signal peptide; it reads MNFLIFIAVASSLALGALC. One can recognise an LCN-type CS-alpha/beta domain in the interval 21 to 80; that stretch reads KEGYPYDGNNCRYICFRNQYCDDLCKKLKGESGYCYGWNQSCYCYGLPDTEKTKPDKRCH. 4 disulfides stabilise this stretch: Cys31–Cys79, Cys35–Cys55, Cys41–Cys62, and Cys45–Cys64.

This sequence belongs to the long (4 C-C) scorpion toxin superfamily. Sodium channel inhibitor family. Alpha subfamily. In terms of tissue distribution, expressed by the venom gland.

It is found in the secreted. Binds voltage-independently at site-3 of voltage-gated sodium channels (Nav) and inhibits the inactivation of the activated channels, thereby blocking neuronal transmission. The protein is Neurotoxin LmNaTx10 of Lychas mucronatus (Chinese swimming scorpion).